Consider the following 264-residue polypeptide: Thymidylate synthase (264 aa).

DUMP contacts are provided by residues Arg21 and 126–127; that span reads RR. The Nucleophile role is filled by Cys146. DUMP-binding positions include 166-169, Asn177, and 207-209; these read RSAD and HLY. Asp169 is a (6R)-5,10-methylene-5,6,7,8-tetrahydrofolate binding site. Ala263 provides a ligand contact to (6R)-5,10-methylene-5,6,7,8-tetrahydrofolate.

It belongs to the thymidylate synthase family. Bacterial-type ThyA subfamily. Homodimer.

The protein resides in the cytoplasm. It catalyses the reaction dUMP + (6R)-5,10-methylene-5,6,7,8-tetrahydrofolate = 7,8-dihydrofolate + dTMP. It participates in pyrimidine metabolism; dTTP biosynthesis. In terms of biological role, catalyzes the reductive methylation of 2'-deoxyuridine-5'-monophosphate (dUMP) to 2'-deoxythymidine-5'-monophosphate (dTMP) while utilizing 5,10-methylenetetrahydrofolate (mTHF) as the methyl donor and reductant in the reaction, yielding dihydrofolate (DHF) as a by-product. This enzymatic reaction provides an intracellular de novo source of dTMP, an essential precursor for DNA biosynthesis. The chain is Thymidylate synthase from Bradyrhizobium sp. (strain BTAi1 / ATCC BAA-1182).